A 453-amino-acid polypeptide reads, in one-letter code: Probable glycine dehydrogenase (decarboxylating) subunit 1 (453 aa).

The protein belongs to the GcvP family. N-terminal subunit subfamily. In terms of assembly, the glycine cleavage system is composed of four proteins: P, T, L and H. In this organism, the P 'protein' is a heterodimer of two subunits.

The enzyme catalyses N(6)-[(R)-lipoyl]-L-lysyl-[glycine-cleavage complex H protein] + glycine + H(+) = N(6)-[(R)-S(8)-aminomethyldihydrolipoyl]-L-lysyl-[glycine-cleavage complex H protein] + CO2. The glycine cleavage system catalyzes the degradation of glycine. The P protein binds the alpha-amino group of glycine through its pyridoxal phosphate cofactor; CO(2) is released and the remaining methylamine moiety is then transferred to the lipoamide cofactor of the H protein. The chain is Probable glycine dehydrogenase (decarboxylating) subunit 1 from Dictyoglomus turgidum (strain DSM 6724 / Z-1310).